Reading from the N-terminus, the 224-residue chain is Small ribosomal subunit protein uS3 (224 aa).

The KH type-2 domain maps to 39–107; it reads VRKYIQNALA…PVHINIEEIR (69 aa).

Belongs to the universal ribosomal protein uS3 family. In terms of assembly, part of the 30S ribosomal subunit. Forms a tight complex with proteins S10 and S14.

Its function is as follows. Binds the lower part of the 30S subunit head. Binds mRNA in the 70S ribosome, positioning it for translation. This Saccharophagus degradans (strain 2-40 / ATCC 43961 / DSM 17024) protein is Small ribosomal subunit protein uS3.